The primary structure comprises 524 residues: Probable malate:quinone oxidoreductase (524 aa).

The protein belongs to the MQO family. FAD is required as a cofactor.

The enzyme catalyses (S)-malate + a quinone = a quinol + oxaloacetate. It functions in the pathway carbohydrate metabolism; tricarboxylic acid cycle; oxaloacetate from (S)-malate (quinone route): step 1/1. The chain is Probable malate:quinone oxidoreductase from Blochmanniella floridana.